A 725-amino-acid polypeptide reads, in one-letter code: Fatty acid oxidation complex subunit alpha (725 aa).

Positions 1-189 are enoyl-CoA hydratase/isomerase; it reads MLYKGDTLYL…KIGLVDGVVK (189 aa). Asp-296 provides a ligand contact to substrate. Residues 311-725 form a 3-hydroxyacyl-CoA dehydrogenase region; that stretch reads ETPKQAAVLG…RLNQPVRLVL (415 aa). Residues Met-324, Asp-343, 400–402, Lys-407, and Ser-429 contribute to the NAD(+) site; that span reads VVE. The active-site For 3-hydroxyacyl-CoA dehydrogenase activity is the His-450. An NAD(+)-binding site is contributed by Asn-453. Substrate is bound by residues Asn-500 and Tyr-660.

In the N-terminal section; belongs to the enoyl-CoA hydratase/isomerase family. The protein in the C-terminal section; belongs to the 3-hydroxyacyl-CoA dehydrogenase family. Heterotetramer of two alpha chains (FadB) and two beta chains (FadA).

It carries out the reaction a (3S)-3-hydroxyacyl-CoA + NAD(+) = a 3-oxoacyl-CoA + NADH + H(+). It catalyses the reaction a (3S)-3-hydroxyacyl-CoA = a (2E)-enoyl-CoA + H2O. The catalysed reaction is a 4-saturated-(3S)-3-hydroxyacyl-CoA = a (3E)-enoyl-CoA + H2O. The enzyme catalyses (3S)-3-hydroxybutanoyl-CoA = (3R)-3-hydroxybutanoyl-CoA. It carries out the reaction a (3Z)-enoyl-CoA = a 4-saturated (2E)-enoyl-CoA. It catalyses the reaction a (3E)-enoyl-CoA = a 4-saturated (2E)-enoyl-CoA. It functions in the pathway lipid metabolism; fatty acid beta-oxidation. Functionally, involved in the aerobic and anaerobic degradation of long-chain fatty acids via beta-oxidation cycle. Catalyzes the formation of 3-oxoacyl-CoA from enoyl-CoA via L-3-hydroxyacyl-CoA. It can also use D-3-hydroxyacyl-CoA and cis-3-enoyl-CoA as substrate. The protein is Fatty acid oxidation complex subunit alpha of Salmonella paratyphi A (strain ATCC 9150 / SARB42).